A 295-amino-acid polypeptide reads, in one-letter code: 3-hydroxy-5-phosphonooxypentane-2,4-dione thiolase (295 aa).

The active-site Schiff-base intermediate with substrate is the Lys203.

It belongs to the DeoC/FbaB aldolase family. Homodecamer.

The protein resides in the cytoplasm. The enzyme catalyses dihydroxyacetone phosphate + acetyl-CoA = 3-hydroxy-2,4-dioxopentyl phosphate + CoA. Involved in the degradation of phospho-AI-2, thereby terminating induction of the lsr operon and closing the AI-2 signaling cycle. Catalyzes the transfer of an acetyl moiety from 3-hydroxy-5-phosphonooxypentane-2,4-dione to CoA to form glycerone phosphate and acetyl-CoA. This is 3-hydroxy-5-phosphonooxypentane-2,4-dione thiolase from Enterobacter sp. (strain 638).